Reading from the N-terminus, the 338-residue chain is 5-dehydro-2-deoxygluconokinase (338 aa).

The protein belongs to the carbohydrate kinase PfkB family.

The enzyme catalyses 5-dehydro-2-deoxy-D-gluconate + ATP = 6-phospho-5-dehydro-2-deoxy-D-gluconate + ADP + H(+). It participates in polyol metabolism; myo-inositol degradation into acetyl-CoA; acetyl-CoA from myo-inositol: step 5/7. Catalyzes the phosphorylation of 5-dehydro-2-deoxy-D-gluconate (2-deoxy-5-keto-D-gluconate or DKG) to 6-phospho-5-dehydro-2-deoxy-D-gluconate (DKGP). The protein is 5-dehydro-2-deoxygluconokinase of Mesomycoplasma hyopneumoniae (strain 7448) (Mycoplasma hyopneumoniae).